Here is a 32-residue protein sequence, read N- to C-terminus: Photosystem I reaction center subunit XII (32 aa).

The chain crosses the membrane as a helical span at residues 3 to 23 (SISDGQIVVALISAFIIVILA).

The protein belongs to the PsaM family.

The protein resides in the plastid. Its subcellular location is the chloroplast thylakoid membrane. The chain is Photosystem I reaction center subunit XII from Anthoceros angustus (Hornwort).